Consider the following 355-residue polypeptide: tRNA N6-adenosine threonylcarbamoyltransferase (355 aa).

The Fe cation site is built by H111 and H115. Substrate is bound by residues 134–138 (LVSGG), D167, G180, D184, and N279. D307 provides a ligand contact to Fe cation.

Belongs to the KAE1 / TsaD family. Fe(2+) is required as a cofactor.

Its subcellular location is the cytoplasm. It carries out the reaction L-threonylcarbamoyladenylate + adenosine(37) in tRNA = N(6)-L-threonylcarbamoyladenosine(37) in tRNA + AMP + H(+). Its function is as follows. Required for the formation of a threonylcarbamoyl group on adenosine at position 37 (t(6)A37) in tRNAs that read codons beginning with adenine. Is involved in the transfer of the threonylcarbamoyl moiety of threonylcarbamoyl-AMP (TC-AMP) to the N6 group of A37, together with TsaE and TsaB. TsaD likely plays a direct catalytic role in this reaction. The sequence is that of tRNA N6-adenosine threonylcarbamoyltransferase from Picosynechococcus sp. (strain ATCC 27264 / PCC 7002 / PR-6) (Agmenellum quadruplicatum).